A 693-amino-acid chain; its full sequence is Polyribonucleotide nucleotidyltransferase (693 aa).

Mg(2+) contacts are provided by D489 and D495. A KH domain is found at 556-615 (PQIHVMNINPAKIKDVVGRGGATVKGIVEKTGAQIDTSDSGEVKVFAKDKKSMDMAVAMI). An S1 motif domain is found at 625–693 (GQVYKGKIVK…GRVKLSLVAR (69 aa)).

This sequence belongs to the polyribonucleotide nucleotidyltransferase family. Component of the RNA degradosome, which is a multiprotein complex involved in RNA processing and mRNA degradation. Requires Mg(2+) as cofactor.

It localises to the cytoplasm. The enzyme catalyses RNA(n+1) + phosphate = RNA(n) + a ribonucleoside 5'-diphosphate. Functionally, involved in mRNA degradation. Catalyzes the phosphorolysis of single-stranded polyribonucleotides processively in the 3'- to 5'-direction. The polypeptide is Polyribonucleotide nucleotidyltransferase (Francisella tularensis subsp. mediasiatica (strain FSC147)).